The sequence spans 140 residues: Nucleoside diphosphate kinase (140 aa).

Positions 9, 57, 85, 91, 102, and 112 each coordinate ATP. Residue His-115 is the Pros-phosphohistidine intermediate of the active site.

Belongs to the NDK family. Homotetramer. Mg(2+) serves as cofactor.

The protein resides in the cytoplasm. The catalysed reaction is a 2'-deoxyribonucleoside 5'-diphosphate + ATP = a 2'-deoxyribonucleoside 5'-triphosphate + ADP. It carries out the reaction a ribonucleoside 5'-diphosphate + ATP = a ribonucleoside 5'-triphosphate + ADP. Functionally, major role in the synthesis of nucleoside triphosphates other than ATP. The ATP gamma phosphate is transferred to the NDP beta phosphate via a ping-pong mechanism, using a phosphorylated active-site intermediate. This Chlorobium chlorochromatii (strain CaD3) protein is Nucleoside diphosphate kinase.